The primary structure comprises 142 residues: Phenylalanine ammonia-lyase (142 aa).

(E)-cinnamate is bound by residues Lys-66, Glu-94, and Asn-97.

This sequence belongs to the PAL/histidase family. In terms of assembly, homotetramer. In terms of processing, contains an active site 4-methylidene-imidazol-5-one (MIO), which is formed autocatalytically by cyclization and dehydration of residues Ala-Ser-Gly.

It is found in the cytoplasm. It catalyses the reaction L-phenylalanine = (E)-cinnamate + NH4(+). It functions in the pathway phenylpropanoid metabolism; trans-cinnamate biosynthesis; trans-cinnamate from L-phenylalanine: step 1/1. Functionally, catalyzes the non-oxidative deamination of L-phenylalanine to form trans-cinnamic acid and a free ammonium ion. Facilitates the commitment step in phenylpropanoid pathways that produce secondary metabolites such as lignins, coumarins and flavonoids. The protein is Phenylalanine ammonia-lyase (palA) of Agaricus bisporus (White button mushroom).